We begin with the raw amino-acid sequence, 125 residues long: Small ribosomal subunit protein uS12m (125 aa).

Disordered regions lie at residues Met1–Arg50 and Gly106–Ile125. Over residues His10–Ala23 the composition is skewed to basic and acidic residues.

It belongs to the universal ribosomal protein uS12 family.

It is found in the mitochondrion. Protein S12 is involved in the translation initiation step. The protein is Small ribosomal subunit protein uS12m (RPS12) of Magnolia soulangeana (Saucer magnolia).